A 491-amino-acid chain; its full sequence is ATP synthase subunit beta, chloroplastic (491 aa).

163-170 (GGAGVGKT) is an ATP binding site.

It belongs to the ATPase alpha/beta chains family. F-type ATPases have 2 components, CF(1) - the catalytic core - and CF(0) - the membrane proton channel. CF(1) has five subunits: alpha(3), beta(3), gamma(1), delta(1), epsilon(1). CF(0) has four main subunits: a(1), b(1), b'(1) and c(9-12).

Its subcellular location is the plastid. The protein localises to the chloroplast thylakoid membrane. The enzyme catalyses ATP + H2O + 4 H(+)(in) = ADP + phosphate + 5 H(+)(out). Functionally, produces ATP from ADP in the presence of a proton gradient across the membrane. The catalytic sites are hosted primarily by the beta subunits. In Nephroselmis olivacea (Green alga), this protein is ATP synthase subunit beta, chloroplastic.